A 399-amino-acid polypeptide reads, in one-letter code: 1-deoxy-D-xylulose 5-phosphate reductoisomerase (399 aa).

Residues T13, G14, S15, I16, and N127 each coordinate NADPH. K128 provides a ligand contact to 1-deoxy-D-xylulose 5-phosphate. E129 contributes to the NADPH binding site. D153 contacts Mn(2+). Positions 154, 155, 187, and 210 each coordinate 1-deoxy-D-xylulose 5-phosphate. Position 155 (E155) interacts with Mn(2+). Position 216 (G216) interacts with NADPH. The 1-deoxy-D-xylulose 5-phosphate site is built by S223, N228, K229, and E232. Residue E232 participates in Mn(2+) binding.

This sequence belongs to the DXR family. The cofactor is Mg(2+). Mn(2+) is required as a cofactor.

It catalyses the reaction 2-C-methyl-D-erythritol 4-phosphate + NADP(+) = 1-deoxy-D-xylulose 5-phosphate + NADPH + H(+). It participates in isoprenoid biosynthesis; isopentenyl diphosphate biosynthesis via DXP pathway; isopentenyl diphosphate from 1-deoxy-D-xylulose 5-phosphate: step 1/6. In terms of biological role, catalyzes the NADPH-dependent rearrangement and reduction of 1-deoxy-D-xylulose-5-phosphate (DXP) to 2-C-methyl-D-erythritol 4-phosphate (MEP). The protein is 1-deoxy-D-xylulose 5-phosphate reductoisomerase of Bordetella petrii (strain ATCC BAA-461 / DSM 12804 / CCUG 43448).